A 485-amino-acid chain; its full sequence is MEVRTRFAPSPTGHLHIGGARTALFNYLFAKRYGGKFILRIEDTDLERSSIESEKVIIESLRWLGIEWDEGVEVGGPYGPYRSTERVDIYKKYVDVLFEKGYAYYCYCTEEELEAQRQELLSKGQMPRYLGKCRNLTEDQKRRFEQEGRKPTVRFKVPEGVKIVVHDLVRGDVEFLSDDIGDFVIVKSDGIPTYNFAVVIDDHLMKISHVIRGEEHLSNTPRQILIYNALGFELPQFAHVSLILGKDRTKMSKRHGSTWVEQYRDQGYLKEGLINFLALLGWSPPEDREIFDMEYLIENFSLERVSKNPAIFDIDKLNYINSQHIKLKSLDELTQMCIPYFVEAGYIKEDEAKSKFEWLKKIVKSVYEGLDYLSQIKDRVDIFFNNEVKIEEDEAKEVLKWDHVKDLINVFENKIRQMNELTPEAIKLLFKEIQKETGYKGKNLFMPIRVALTGKTHGPELVEIIEIVGKENILKRLEFFKTWYN.

Residues 9-19 (PSPTGHLHIGG) carry the 'HIGH' region motif. Residues 250 to 254 (KMSKR) carry the 'KMSKS' region motif. ATP is bound at residue K253.

Belongs to the class-I aminoacyl-tRNA synthetase family. Glutamate--tRNA ligase type 1 subfamily. In terms of assembly, monomer.

The protein resides in the cytoplasm. The enzyme catalyses tRNA(Glu) + L-glutamate + ATP = L-glutamyl-tRNA(Glu) + AMP + diphosphate. Catalyzes the attachment of glutamate to tRNA(Glu) in a two-step reaction: glutamate is first activated by ATP to form Glu-AMP and then transferred to the acceptor end of tRNA(Glu). This Caldicellulosiruptor saccharolyticus (strain ATCC 43494 / DSM 8903 / Tp8T 6331) protein is Glutamate--tRNA ligase 1.